A 69-amino-acid chain; its full sequence is uncharacterized protein (69 aa).

The interval 21 to 42 (MYAANKKSDARRRGKVGKEQWE) is disordered. Positions 35–69 (KVGKEQWEKEMEQYNIQKAQFEKELKEKKEKELKK) form a coiled coil.

This is an uncharacterized protein from Acheta domesticus (House cricket).